We begin with the raw amino-acid sequence, 309 residues long: Olfactory receptor 14A16 (309 aa).

At 1–23 (MANLTIVTEFILMGFSTNKNMCI) the chain is on the extracellular side. Residue Asn-3 is glycosylated (N-linked (GlcNAc...) asparagine). Residues 24–44 (LHSILFLLIYLCALMGNVLII) form a helical membrane-spanning segment. The Cytoplasmic segment spans residues 45–52 (MITTLDHH). Residues 53-73 (LHTPVYFFLKNLSFLDLCLIS) form a helical membrane-spanning segment. The Extracellular portion of the chain corresponds to 74-97 (VTAPKSIANSLIHNNSISFLGCVS). Asn-87 carries an N-linked (GlcNAc...) asparagine glycan. A disulfide bridge connects residues Cys-95 and Cys-187. A helical membrane pass occupies residues 98-118 (QVFLLLSSASAELLLLTVMSF). The Cytoplasmic portion of the chain corresponds to 119–131 (DRYTAICHPLHYD). Residues 132-152 (VIMDRSTCVQRATVSWLYGGL) form a helical membrane-spanning segment. Topologically, residues 153 to 194 (IAVMHTAGTFSLSYCGSNMVHQFFCDIPQLLAISCSENLIRE) are extracellular. A helical membrane pass occupies residues 195–215 (IALILINVVLDFCCFIVIIIT). Residues 216-235 (YVHVFSTVKKIPSTEGQSKA) lie on the Cytoplasmic side of the membrane. Residues 236 to 255 (YSICLPHLLVVLFLSTGFIA) form a helical membrane-spanning segment. The Extracellular segment spans residues 256 to 268 (YLKPASESPSILD). Residues 269–289 (AVISVFYTMLPPTFNPIIYSL) traverse the membrane as a helical segment. Over 290–309 (RNKAIKVALGMLIKGKLTKK) the chain is Cytoplasmic.

The protein belongs to the G-protein coupled receptor 1 family.

Its subcellular location is the cell membrane. Its function is as follows. Odorant receptor. The polypeptide is Olfactory receptor 14A16 (OR14A16) (Homo sapiens (Human)).